A 555-amino-acid chain; its full sequence is Formate--tetrahydrofolate ligase (555 aa).

ATP is bound at residue 64-71; it reads TPAGEGKT.

It belongs to the formate--tetrahydrofolate ligase family.

It carries out the reaction (6S)-5,6,7,8-tetrahydrofolate + formate + ATP = (6R)-10-formyltetrahydrofolate + ADP + phosphate. The protein operates within one-carbon metabolism; tetrahydrofolate interconversion. This is Formate--tetrahydrofolate ligase from Dinoroseobacter shibae (strain DSM 16493 / NCIMB 14021 / DFL 12).